The chain runs to 206 residues: Large ribosomal subunit protein uL4 (206 aa).

This sequence belongs to the universal ribosomal protein uL4 family. In terms of assembly, part of the 50S ribosomal subunit.

In terms of biological role, one of the primary rRNA binding proteins, this protein initially binds near the 5'-end of the 23S rRNA. It is important during the early stages of 50S assembly. It makes multiple contacts with different domains of the 23S rRNA in the assembled 50S subunit and ribosome. Functionally, forms part of the polypeptide exit tunnel. The protein is Large ribosomal subunit protein uL4 of Bradyrhizobium sp. (strain ORS 278).